A 524-amino-acid chain; its full sequence is Glutamyl-tRNA(Gln) amidotransferase subunit A (524 aa).

Catalysis depends on charge relay system residues Lys109 and Ser184. Ser208 serves as the catalytic Acyl-ester intermediate.

It belongs to the amidase family. GatA subfamily. In terms of assembly, heterotrimer of A, B and C subunits.

The catalysed reaction is L-glutamyl-tRNA(Gln) + L-glutamine + ATP + H2O = L-glutaminyl-tRNA(Gln) + L-glutamate + ADP + phosphate + H(+). Functionally, allows the formation of correctly charged Gln-tRNA(Gln) through the transamidation of misacylated Glu-tRNA(Gln) in organisms which lack glutaminyl-tRNA synthetase. The reaction takes place in the presence of glutamine and ATP through an activated gamma-phospho-Glu-tRNA(Gln). This chain is Glutamyl-tRNA(Gln) amidotransferase subunit A, found in Tropheryma whipplei (strain Twist) (Whipple's bacillus).